Here is a 505-residue protein sequence, read N- to C-terminus: OVARIAN TUMOR DOMAIN-containing deubiquitinating enzyme 6 (505 aa).

The disordered stretch occupies residues 1 to 191 (MTRILVQRGS…NSSDEHMPCY (191 aa)). Residues 9-30 (GSSGSSSNSSRPSSSSSSSSGS) are compositionally biased toward low complexity. Residues 51 to 72 (DEKQEEVTVVEKAECSDAKDVA) are compositionally biased toward basic and acidic residues. Positions 73–86 (VDSDEPADREDDEG) are enriched in acidic residues. Over residues 115 to 124 (PPVPAPPPKP) the composition is skewed to pro residues. The segment covering 159 to 173 (SSRSSPTGSHPSSPR) has biased composition (low complexity). Residues 174–188 (SHSENEGYNSSDEHM) show a composition bias toward basic and acidic residues. The 124-residue stretch at 216–339 (FEIRRMLEDG…GNHYNSLVDP (124 aa)) folds into the OTU domain. The active site involves Asp224. The active-site Nucleophile is the Cys227. Residue His332 is part of the active site. The interval 416–447 (RIGPKESSTSNAETSSSGARPSGSDSKPAEAV) is disordered. Positions 421–441 (ESSTSNAETSSSGARPSGSDS) are enriched in low complexity. The UBA domain maps to 446–491 (AVKEKTVLSSSIEMVLSMGFSYAQAMEAYSIFGDDVDSMVCYVLET).

Belongs to the peptidase C85 family. As to quaternary structure, interacts with KDM1C. In terms of tissue distribution, mostly expressed in stems flowers and siliques, and, to a lower extent, in leaves, roots and seedlings.

It is found in the nucleus. The protein localises to the cytoplasm. The enzyme catalyses Thiol-dependent hydrolysis of ester, thioester, amide, peptide and isopeptide bonds formed by the C-terminal Gly of ubiquitin (a 76-residue protein attached to proteins as an intracellular targeting signal).. Hydrolase that can remove conjugated ubiquitin from proteins in vitro and may therefore play an important regulatory role at the level of protein turnover by preventing degradation. Binds chromatin (e.g. nucleosomes and histones) and has enzymatic histone deubiquitinase activity, specific for the H2B histone. Can both repress (e.g. OSR2) and promote (e.g. AN3) the expression of target genes by associating with chromatin, deubiquitinating H2B and regulating its euchromatic histone marks (e.g. H3ac and H3K4me). In association with LDL1/KDM1C, involved in transcriptional gene repression via histone deubiquitination and demethylation. Promotes the concerted epigenetic regulation and repression (e.g. the removal of euchromatic histone acetylation, ubiquitination, and methylation marks) of a set of genes (e.g. GA20OX, WUS, OSR2, ARL and ABI5) that collectively limit plant growth thus stimulating plant growth and increasing cell size. The protein is OVARIAN TUMOR DOMAIN-containing deubiquitinating enzyme 6 of Arabidopsis thaliana (Mouse-ear cress).